Reading from the N-terminus, the 363-residue chain is Fructose-bisphosphate aldolase C (363 aa).

Y5 is subject to Phosphotyrosine. A phosphoserine mark is found at S36, S39, and S45. Position 56 (R56) interacts with substrate. N6-acetyllysine is present on K111. Residue K147 participates in substrate binding. Residue E188 is the Proton acceptor of the active site. K230 acts as the Schiff-base intermediate with dihydroxyacetone-P in catalysis.

The protein belongs to the class I fructose-bisphosphate aldolase family. Homotetramer. Interacts with ATP6V1E1. Expressed exclusively in Purkinje cells in bands running from anterior to posterior across most of the cerebellum. Expressed at higher levels in the brains of BSE-infected animals.

The enzyme catalyses beta-D-fructose 1,6-bisphosphate = D-glyceraldehyde 3-phosphate + dihydroxyacetone phosphate. It participates in carbohydrate degradation; glycolysis; D-glyceraldehyde 3-phosphate and glycerone phosphate from D-glucose: step 4/4. The chain is Fructose-bisphosphate aldolase C (Aldoc) from Mus musculus (Mouse).